Reading from the N-terminus, the 559-residue chain is Glycerol kinase (559 aa).

Threonine 20 provides a ligand contact to ADP. 3 residues coordinate ATP: threonine 20, serine 21, and serine 22. A sn-glycerol 3-phosphate-binding site is contributed by threonine 20. Arginine 24 is an ADP binding site. Sn-glycerol 3-phosphate contacts are provided by arginine 94, glutamate 95, and tyrosine 148. Glycerol-binding residues include arginine 94, glutamate 95, and tyrosine 148. Glycine 252 is a beta-D-fructose 1,6-bisphosphate binding site. Aspartate 265 contributes to the sn-glycerol 3-phosphate binding site. The glycerol site is built by aspartate 265 and glutamine 266. The ADP site is built by threonine 287, glycine 332, glycine 433, and asparagine 437. 3 residues coordinate ATP: threonine 287, glycine 332, and glycine 433. Glutamate 501 is a binding site for Zn(2+). Residues 532–552 traverse the membrane as a helical segment; it reads IFCSLPLGFFIVSSVVMLIGA.

The protein belongs to the FGGY kinase family.

The protein resides in the mitochondrion outer membrane. It localises to the nucleus. Its subcellular location is the cytoplasm. It is found in the cytosol. It catalyses the reaction glycerol + ATP = sn-glycerol 3-phosphate + ADP + H(+). It functions in the pathway polyol metabolism; glycerol degradation via glycerol kinase pathway; sn-glycerol 3-phosphate from glycerol: step 1/1. In terms of biological role, kinase that plays a key role in glycerol metabolism, catalyzing its phosphorylation to produce sn-glycerol 3-phosphate. Sn-glycerol 3-phosphate is a crucial intermediate in various metabolic pathways, such as the synthesis of glycerolipids and triglycerides, glycogenesis, glycolysis and gluconeogenesis. The protein is Glycerol kinase of Bos taurus (Bovine).